Consider the following 192-residue polypeptide: UPF0312 protein PSPTO_5071 (192 aa).

The first 23 residues, 1–23 (MLKKSLAALALGTALLSAGQAMA), serve as a signal peptide directing secretion.

The protein belongs to the UPF0312 family. Type 1 subfamily.

The protein resides in the periplasm. This Pseudomonas syringae pv. tomato (strain ATCC BAA-871 / DC3000) protein is UPF0312 protein PSPTO_5071.